Reading from the N-terminus, the 139-residue chain is Transcription antitermination protein NusB (139 aa).

Belongs to the NusB family.

Involved in transcription antitermination. Required for transcription of ribosomal RNA (rRNA) genes. Binds specifically to the boxA antiterminator sequence of the ribosomal RNA (rrn) operons. The polypeptide is Transcription antitermination protein NusB (Lactiplantibacillus plantarum (strain ATCC BAA-793 / NCIMB 8826 / WCFS1) (Lactobacillus plantarum)).